A 349-amino-acid chain; its full sequence is Paired box protein Pax-4 (349 aa).

A DNA-binding region (paired) is located at residues 5–131 (GLSSVNQLGG…SSINRVLRAL (127 aa)). The PAI subdomain stretch occupies residues 8-64 (SVNQLGGLFVNGRPLPLDTRQQIVQLAIRGMRPCDISRSLKVSNGCVSKILGRYYRT). Residues 83 to 131 (AVVARIAQLKDEYPALFAWEIQRQLCAEGLCTQDKAPSVSSINRVLRAL) form an RED subdomain region. The homeobox DNA-binding region spans 170 to 229 (SHRNRTIFSPGQAEALEKEFQRGQYPDSVVRGKLAAATSLPEDTVRVWFSNRRAKWRRQE). Residues 278 to 349 (FCQLCWGAVP…APSTYYLHWP (72 aa)) form a transcription repression region.

The protein belongs to the paired homeobox family. In terms of tissue distribution, specifically expressed in pancreatic islets.

The protein localises to the nucleus. In terms of biological role, plays an important role in the differentiation and development of pancreatic islet beta cells. Transcriptional repressor that competes with PAX6 in binding to a common element in the glucagon, insulin and somatostatin promoters. In Rattus norvegicus (Rat), this protein is Paired box protein Pax-4 (Pax4).